We begin with the raw amino-acid sequence, 103 residues long: Large ribosomal subunit protein eL43 (103 aa).

Belongs to the eukaryotic ribosomal protein eL43 family.

The polypeptide is Large ribosomal subunit protein eL43 (RPL37A) (Tetrahymena thermophila (strain SB210)).